A 638-amino-acid polypeptide reads, in one-letter code: Chaperone protein HtpG (638 aa).

Residues 1-346 are a; substrate-binding; the sequence is MSQQETHGFQ…SNDLPLNVSR (346 aa). The segment at 347–563 is b; it reads EILQDNKVTT…EGEMSTQMIK (217 aa). The c stretch occupies residues 564 to 638; that stretch reads LMEAAGQAVP…MNEMLLAKLK (75 aa).

The protein belongs to the heat shock protein 90 family. Homodimer.

It is found in the cytoplasm. Molecular chaperone. Has ATPase activity. This Shewanella sediminis (strain HAW-EB3) protein is Chaperone protein HtpG.